Here is a 341-residue protein sequence, read N- to C-terminus: Heme A synthase (341 aa).

The next 8 helical transmembrane spans lie at 7-27 (VTVWLGVCCSMTLLMVVIGGI), 92-112 (LFGRALGAVFCLPIPYFAITK), 118-138 (MVAKLLMVALLGGMQGAMGWF), 159-179 (LFLTILLFSILWHSFLRCAGV), 190-210 (FFTAAAVVGLTVLQMVLGALV), 253-273 (FLHRLVAVLIVVCAAPLPFWL), 280-300 (LFLACVALQFLLGVATLVSVV), and 302-322 (IFLAAMHQVFGFVTLAAGVHM). Histidine 255 lines the heme pocket. Residue histidine 308 coordinates heme.

Belongs to the COX15/CtaA family. Type 2 subfamily. As to quaternary structure, interacts with CtaB. Heme b serves as cofactor.

It localises to the cell membrane. The catalysed reaction is Fe(II)-heme o + 2 A + H2O = Fe(II)-heme a + 2 AH2. It participates in porphyrin-containing compound metabolism; heme A biosynthesis; heme A from heme O: step 1/1. Its function is as follows. Catalyzes the conversion of heme O to heme A by two successive hydroxylations of the methyl group at C8. The first hydroxylation forms heme I, the second hydroxylation results in an unstable dihydroxymethyl group, which spontaneously dehydrates, resulting in the formyl group of heme A. The protein is Heme A synthase of Anaplasma marginale (strain Florida).